The sequence spans 466 residues: A-type ATP synthase subunit B (466 aa).

The protein belongs to the ATPase alpha/beta chains family. Has multiple subunits with at least A(3), B(3), C, D, E, F, H, I and proteolipid K(x).

The protein resides in the cell membrane. In terms of biological role, component of the A-type ATP synthase that produces ATP from ADP in the presence of a proton gradient across the membrane. The B chain is a regulatory subunit. The polypeptide is A-type ATP synthase subunit B (Sulfolobus acidocaldarius (strain ATCC 33909 / DSM 639 / JCM 8929 / NBRC 15157 / NCIMB 11770)).